The sequence spans 330 residues: Phosphate acyltransferase (330 aa).

The protein belongs to the PlsX family. Homodimer. Probably interacts with PlsY.

The protein localises to the cytoplasm. The catalysed reaction is a fatty acyl-[ACP] + phosphate = an acyl phosphate + holo-[ACP]. It participates in lipid metabolism; phospholipid metabolism. Catalyzes the reversible formation of acyl-phosphate (acyl-PO(4)) from acyl-[acyl-carrier-protein] (acyl-ACP). This enzyme utilizes acyl-ACP as fatty acyl donor, but not acyl-CoA. In Bacillus cereus (strain ATCC 14579 / DSM 31 / CCUG 7414 / JCM 2152 / NBRC 15305 / NCIMB 9373 / NCTC 2599 / NRRL B-3711), this protein is Phosphate acyltransferase.